The sequence spans 226 residues: Prolactin (226 aa).

Residues 1-29 (MNSQGSAQKAGTLLLLLISNLLFCQNVQP) form the signal peptide. A disulfide bridge connects residues cysteine 33 and cysteine 38. Phosphoserine is present on residues serine 53 and serine 117. 2 disulfide bridges follow: cysteine 85/cysteine 201 and cysteine 218/cysteine 226.

The protein belongs to the somatotropin/prolactin family. As to quaternary structure, interacts with PRLR.

It is found in the secreted. Prolactin acts primarily on the mammary gland by promoting lactation. This Mus musculus (Mouse) protein is Prolactin (Prl).